A 385-amino-acid polypeptide reads, in one-letter code: G2/mitotic-specific cyclin-B3 (385 aa).

Residues 1 to 16 (MMLRSQAKNVDLTSQA) are compositionally biased toward polar residues. Disordered stretches follow at residues 1 to 48 (MMLR…HSKG) and 63 to 88 (SAKRDPLGKSRTSRRDVENLPPQKSR). 2 stretches are compositionally biased toward basic and acidic residues: residues 17–28 (DSRHQQKRKQAE) and 63–80 (SAKRDPLGKSRTSRRDVE).

This sequence belongs to the cyclin family. Cyclin AB subfamily.

The protein resides in the nucleus. Could be involved at the G2/M (mitosis) transition. Interacts with the CDK1 and CDK2 protein kinases. G2/M cyclins accumulate steadily during G2 and are abruptly destroyed at mitosis. Plays a role during oocyte meiosis II. This Caenorhabditis elegans protein is G2/mitotic-specific cyclin-B3 (cyb-3).